Consider the following 171-residue polypeptide: MTFISNLADTRLAWGLLFLSALVLVAYALFSQHAMGLQPCIMCIYQRTAIFGIMFACVPVLAANNMLTRLFAFTVWGISAIWGGLIAWEHYDIQNAANPFFATCEIVPNFPSWLPLHEWLPNLFAATGDCGNIDWVFMDMSMPQWMMVVFAIYSSIWFVVLASRLIGNRAI.

The Cytoplasmic portion of the chain corresponds to 1–13; that stretch reads MTFISNLADTRLA. The chain crosses the membrane as a helical span at residues 14 to 30; sequence WGLLFLSALVLVAYALF. Over 31–48 the chain is Periplasmic; sequence SQHAMGLQPCIMCIYQRT. Residues cysteine 40 and cysteine 43 are joined by a disulfide bond. The chain crosses the membrane as a helical span at residues 49-63; that stretch reads AIFGIMFACVPVLAA. At 64–70 the chain is on the cytoplasmic side; that stretch reads NNMLTRL. The chain crosses the membrane as a helical span at residues 71–88; sequence FAFTVWGISAIWGGLIAW. Residues 89 to 144 lie on the Periplasmic side of the membrane; sequence EHYDIQNAANPFFATCEIVPNFPSWLPLHEWLPNLFAATGDCGNIDWVFMDMSMPQ. A disulfide bridge connects residues cysteine 104 and cysteine 130. Residues 145–163 form a helical membrane-spanning segment; that stretch reads WMMVVFAIYSSIWFVVLAS. The Cytoplasmic segment spans residues 164–171; sequence RLIGNRAI.

Belongs to the DsbB family.

Its subcellular location is the cell inner membrane. Its function is as follows. Required for disulfide bond formation in some periplasmic proteins. Acts by oxidizing the DsbA protein. The protein is Disulfide bond formation protein B of Pseudoalteromonas atlantica (strain T6c / ATCC BAA-1087).